We begin with the raw amino-acid sequence, 177 residues long: Small ribosomal subunit protein uS5 (177 aa).

Positions 14–77 constitute an S5 DRBM domain; sequence LQEKLITVNR…EKARHNMIDI (64 aa).

It belongs to the universal ribosomal protein uS5 family. As to quaternary structure, part of the 30S ribosomal subunit. Contacts proteins S4 and S8.

Its function is as follows. With S4 and S12 plays an important role in translational accuracy. Functionally, located at the back of the 30S subunit body where it stabilizes the conformation of the head with respect to the body. The chain is Small ribosomal subunit protein uS5 from Blochmanniella floridana.